Here is a 357-residue protein sequence, read N- to C-terminus: Spermatogenesis- and oogenesis-specific basic helix-loop-helix-containing protein 1 (357 aa).

Basic and acidic residues predominate over residues Met1–Arg14. The interval Met1 to Ser40 is disordered. Positions Thr19–Asp31 are enriched in polar residues. The region spanning Pro54–Ala105 is the bHLH domain. The interval Lys145–Gly210 is disordered. The span at Ser200–Pro209 shows a compositional bias: low complexity.

As to quaternary structure, forms both hetero- and homodimers with SOHLH2. As to expression, in males, it is mainly expressed in testis, while in females it is mainly expressed in ovary. In testis, it is exclusively expressed in spermatogonia, with a preference for prespermatogonia and type A spermatogonia. In ovary, it is detected in germ cell cysts, primordial follicles, and primary follicles but is undetectable by the secondary follicle stage (at protein level). Expressed in the majority of spermatogonia in adult animals, but not in the most undifferentiated spermatogonial population.

The protein resides in the cytoplasm. It localises to the nucleus. Functionally, transcription regulator of both male and female germline differentiation. Suppresses genes involved in spermatogonial stem cells maintenance, and induces genes important for spermatogonial differentiation. Coordinates oocyte differentiation without affecting meiosis I. The polypeptide is Spermatogenesis- and oogenesis-specific basic helix-loop-helix-containing protein 1 (Sohlh1) (Mus musculus (Mouse)).